A 453-amino-acid polypeptide reads, in one-letter code: Tryptophan biosynthesis protein TrpCF (453 aa).

Residues 1-257 (MMQTVLAKIV…AAVRRVLLGE (257 aa)) are indole-3-glycerol phosphate synthase. The interval 258 to 453 (NKVCGLTRGQ…ASVFQTLRAY (196 aa)) is N-(5'-phosphoribosyl)anthranilate isomerase.

In the N-terminal section; belongs to the TrpC family. The protein in the C-terminal section; belongs to the TrpF family. Monomer.

It catalyses the reaction N-(5-phospho-beta-D-ribosyl)anthranilate = 1-(2-carboxyphenylamino)-1-deoxy-D-ribulose 5-phosphate. The enzyme catalyses 1-(2-carboxyphenylamino)-1-deoxy-D-ribulose 5-phosphate + H(+) = (1S,2R)-1-C-(indol-3-yl)glycerol 3-phosphate + CO2 + H2O. It functions in the pathway amino-acid biosynthesis; L-tryptophan biosynthesis; L-tryptophan from chorismate: step 3/5. Its pathway is amino-acid biosynthesis; L-tryptophan biosynthesis; L-tryptophan from chorismate: step 4/5. Bifunctional enzyme that catalyzes two sequential steps of tryptophan biosynthetic pathway. The first reaction is catalyzed by the isomerase, coded by the TrpF domain; the second reaction is catalyzed by the synthase, coded by the TrpC domain. This Escherichia coli O157:H7 protein is Tryptophan biosynthesis protein TrpCF (trpC).